A 205-amino-acid polypeptide reads, in one-letter code: Large ribosomal subunit protein uL4 (205 aa).

A disordered region spans residues 43–95 (RSGNRAQKDRAEVKHSTKKPWRQKGTGRARAGMTSSPLWRGGGRAFPNSPEEN). Over residues 48-57 (AQKDRAEVKH) the composition is skewed to basic and acidic residues. Residues 58–69 (STKKPWRQKGTG) show a composition bias toward basic residues.

The protein belongs to the universal ribosomal protein uL4 family. As to quaternary structure, part of the 50S ribosomal subunit.

In terms of biological role, one of the primary rRNA binding proteins, this protein initially binds near the 5'-end of the 23S rRNA. It is important during the early stages of 50S assembly. It makes multiple contacts with different domains of the 23S rRNA in the assembled 50S subunit and ribosome. Forms part of the polypeptide exit tunnel. The protein is Large ribosomal subunit protein uL4 of Bordetella bronchiseptica (strain ATCC BAA-588 / NCTC 13252 / RB50) (Alcaligenes bronchisepticus).